Reading from the N-terminus, the 211-residue chain is Phosphoserine phosphatase 1 (211 aa).

His-9 acts as the Tele-phosphohistidine intermediate in catalysis. Residue His-150 is part of the active site.

It belongs to the histidine phosphatase superfamily. Metal-independent phosphoserine phosphatase family. In terms of assembly, homodimer. Can also form a heterodimer with PspB.

It catalyses the reaction O-phospho-L-serine + H2O = L-serine + phosphate. The catalysed reaction is O-phospho-D-serine + H2O = D-serine + phosphate. The protein operates within amino-acid biosynthesis; L-serine biosynthesis; L-serine from 3-phospho-D-glycerate: step 3/3. With respect to regulation, activity is not inhibited by EDTA in vitro, nor enhanced by the addition of Mg(2+). Catalyzes the dephosphorylation of L-phosphoserine to serine and inorganic phosphate. Is poorly or not active toward D-phosphoserine, DL-phosphothreonine, 3-phosphoglycerate, para-nitrophenylphosphate, and fructose-6-phosphate. Does not display phosphoglycerate mutase activity. This Hydrogenobacter thermophilus (strain DSM 6534 / IAM 12695 / TK-6) protein is Phosphoserine phosphatase 1 (pspA).